Reading from the N-terminus, the 157-residue chain is Phosphopantetheine adenylyltransferase (157 aa).

This sequence belongs to the eukaryotic CoaD family.

The protein resides in the cytoplasm. The catalysed reaction is (R)-4'-phosphopantetheine + ATP + H(+) = 3'-dephospho-CoA + diphosphate. Its pathway is cofactor biosynthesis; coenzyme A biosynthesis. Reversibly transfers an adenylyl group from ATP to 4'-phosphopantetheine, yielding dephospho-CoA (dPCoA) and pyrophosphate. The sequence is that of Phosphopantetheine adenylyltransferase from Methanopyrus kandleri (strain AV19 / DSM 6324 / JCM 9639 / NBRC 100938).